The primary structure comprises 313 residues: Intracellular endo-alpha-(1-&gt;5)-L-arabinanase (313 aa).

The active-site Proton acceptor is D27. Residues D27, G105, 144–147 (NAID), and 164–166 (SFW) contribute to the substrate site. E201 (proton donor) is an active-site residue. H271 serves as a coordination point for Ca(2+).

The protein belongs to the glycosyl hydrolase 43 family. Monomer. Ca(2+) serves as cofactor.

The protein localises to the cytoplasm. It catalyses the reaction Endohydrolysis of (1-&gt;5)-alpha-arabinofuranosidic linkages in (1-&gt;5)-arabinans.. The protein operates within glycan metabolism; L-arabinan degradation. Its function is as follows. Involved in the degradation of arabinan and is a key enzyme in the complete degradation of the plant cell wall. Catalyzes the cleavage of endo alpha-(1-&gt;5)-L-arabinofuranosyl residues in debranched arabinan. This is Intracellular endo-alpha-(1-&gt;5)-L-arabinanase (abn-ts) from Geobacillus thermodenitrificans.